The following is a 320-amino-acid chain: Transcription factor MYB80 (320 aa).

HTH myb-type domains follow at residues 9-65 (KENV…RPDL) and 66-116 (KHGQ…KKKL). 2 DNA-binding regions (H-T-H motif) span residues 37–61 (WRLI…TNYL) and 89–112 (WSLI…NTKL). The disordered stretch occupies residues 257–283 (TAAAEEEERRKLKGEVVDQEEIGSEGG). The span at 263-272 (EERRKLKGEV) shows a compositional bias: basic and acidic residues.

As to expression, expressed in the tapetum and middle layer of developing anthers. Expressed in trichomes.

The protein localises to the nucleus. Transcription factor that binds to the DNA sequence 5'-CCAACC-3'. Regulates directly PME5, UND and GLOX1. Essential for tapetum development in anthers and microsporogenesis. Regulates the timing of tapetal programmed cell death (PCD) which is critical for pollen development. May act through the activation of UND, encoding an A1 aspartic protease. Required for anther development by regulating tapetum development, callose dissolution and exine formation. Acts upstream of A6 and FAR2/MS2, two genes required for pollen exine formation. Negatively regulates trichome endoreduplication and trichome branching. This chain is Transcription factor MYB80, found in Arabidopsis thaliana (Mouse-ear cress).